A 148-amino-acid polypeptide reads, in one-letter code: Hemoglobin subunit beta (148 aa).

The region spanning 3–148 (DWTDAERSAI…VVSALGRQYH (146 aa)) is the Globin domain. His-64 and His-93 together coordinate heme b.

This sequence belongs to the globin family. In terms of assembly, heterotetramer of two alpha chains and two beta chains. Red blood cells.

Functionally, involved in oxygen transport from gills to the various peripheral tissues. This is Hemoglobin subunit beta (hbb) from Salmo salar (Atlantic salmon).